The following is a 143-amino-acid chain: Transcriptional regulator MraZ (143 aa).

SpoVT-AbrB domains follow at residues 5–47 (EYQH…PQEE) and 76–119 (ASEC…SKSE).

The protein belongs to the MraZ family. Forms oligomers.

The protein resides in the cytoplasm. Its subcellular location is the nucleoid. This is Transcriptional regulator MraZ from Listeria welshimeri serovar 6b (strain ATCC 35897 / DSM 20650 / CCUG 15529 / CIP 8149 / NCTC 11857 / SLCC 5334 / V8).